Here is a 325-residue protein sequence, read N- to C-terminus: Diacylglycerol acyltransferase/mycolyltransferase Ag85B (325 aa).

A signal peptide spans 1-38 (MTFIDKIRGHWARRMTVAAVAALLLPGLVGVVGGSATA). 82-83 (LR) is a binding site for substrate. The fibronectin-binding stretch occupies residues 98 to 108 (FEMFLDSGLSV). Cys127 and Cys132 are disulfide-bonded. Ser166 serves as a coordination point for substrate. Ser166 (nucleophile) is an active-site residue. Residue Glu272 is part of the active site. Substrate contacts are provided by residues 274–277 (LTIR) and 304–306 (HNW). The active site involves His304.

The protein belongs to the mycobacterial A85 antigen family.

It is found in the secreted. It carries out the reaction 2 alpha,alpha'-trehalose 6-mycolate = alpha,alpha'-trehalose 6,6'-bismycolate + alpha,alpha-trehalose. The catalysed reaction is an acyl-CoA + a 1,2-diacyl-sn-glycerol = a triacyl-sn-glycerol + CoA. The antigen 85 proteins (FbpA, FbpB, FbpC) are responsible for the high affinity of mycobacteria for fibronectin, a large adhesive glycoprotein. They also help to maintain the integrity of the cell wall by catalyzing the transfer of mycolic acids to cell wall arabinogalactan and through the synthesis of alpha,alpha-trehalose dimycolate (TDM, cord factor). They catalyze the transfer of a mycoloyl residue from one molecule of alpha,alpha-trehalose monomycolate (TMM) to another TMM, leading to the formation of TDM. The sequence is that of Diacylglycerol acyltransferase/mycolyltransferase Ag85B (fbpB) from Mycolicibacterium smegmatis (strain ATCC 700084 / mc(2)155) (Mycobacterium smegmatis).